The sequence spans 147 residues: 18 kDa antigen 1 (147 aa).

In terms of domain architecture, sHSP spans 21–131; it reads TPTRPAVMPM…RPRKIAVGAA (111 aa).

Belongs to the small heat shock protein (HSP20) family.

Its function is as follows. Not known. This protein is one of the major immune reactive proteins in mycobacteria. This chain is 18 kDa antigen 1, found in Mycobacterium avium.